The sequence spans 264 residues: Shikimate dehydrogenase (NADP(+)) (264 aa).

Residues 14–16 (SVS) and Thr-61 contribute to the shikimate site. The active-site Proton acceptor is Lys-65. 2 residues coordinate shikimate: Asn-85 and Asp-99. NADP(+) contacts are provided by residues 122–126 (GAGGA), 145–150 (NRTVSR), and Ala-208. Tyr-210 serves as a coordination point for shikimate. Gly-231 contributes to the NADP(+) binding site.

It belongs to the shikimate dehydrogenase family. As to quaternary structure, homodimer.

It carries out the reaction shikimate + NADP(+) = 3-dehydroshikimate + NADPH + H(+). Its pathway is metabolic intermediate biosynthesis; chorismate biosynthesis; chorismate from D-erythrose 4-phosphate and phosphoenolpyruvate: step 4/7. Functionally, involved in the biosynthesis of the chorismate, which leads to the biosynthesis of aromatic amino acids. Catalyzes the reversible NADPH linked reduction of 3-dehydroshikimate (DHSA) to yield shikimate (SA). The polypeptide is Shikimate dehydrogenase (NADP(+)) (Natronomonas pharaonis (strain ATCC 35678 / DSM 2160 / CIP 103997 / JCM 8858 / NBRC 14720 / NCIMB 2260 / Gabara) (Halobacterium pharaonis)).